A 117-amino-acid chain; its full sequence is Colipase (117 aa).

The first 22 residues, 1 to 22, serve as a signal peptide directing secretion; that stretch reads MNIFNILLPIVVLLLVFGLTAA. 5 cysteine pairs are disulfide-bonded: C39-C50, C45-C61, C49-C83, C71-C91, and C85-C109.

This sequence belongs to the colipase family. Forms a 1:1 stoichiometric complex with pancreatic lipase.

The protein localises to the secreted. In terms of biological role, colipase is a cofactor of pancreatic lipase. It allows the lipase to anchor itself to the lipid-water interface. Without colipase the enzyme is washed off by bile salts, which have an inhibitory effect on the lipase. In Xenopus tropicalis (Western clawed frog), this protein is Colipase (clps).